Consider the following 341-residue polypeptide: Tubulin beta chain (341 aa).

Residues Ser64, Gly68, Thr69, Gly70, Asn130, and Asn152 each coordinate GTP.

This sequence belongs to the tubulin family. In terms of assembly, dimer of alpha and beta chains. A typical microtubule is a hollow water-filled tube with an outer diameter of 25 nm and an inner diameter of 15 nM. Alpha-beta heterodimers associate head-to-tail to form protofilaments running lengthwise along the microtubule wall with the beta-tubulin subunit facing the microtubule plus end conferring a structural polarity. Microtubules usually have 13 protofilaments but different protofilament numbers can be found in some organisms and specialized cells. It depends on Mg(2+) as a cofactor.

It is found in the cytoplasm. Its subcellular location is the cytoskeleton. Its function is as follows. Tubulin is the major constituent of microtubules, a cylinder consisting of laterally associated linear protofilaments composed of alpha- and beta-tubulin heterodimers. Microtubules grow by the addition of GTP-tubulin dimers to the microtubule end, where a stabilizing cap forms. Below the cap, tubulin dimers are in GDP-bound state, owing to GTPase activity of alpha-tubulin. This is Tubulin beta chain from Haliotis discus (Abalone).